The chain runs to 415 residues: All trans-polyprenyl-diphosphate synthase PDSS1 (415 aa).

The disordered stretch occupies residues 16-35 (PAARSPGPGSPGRAGPLGPS). The isopentenyl diphosphate site is built by K134, R137, and H173. Residues D180 and D184 each contribute to the Mg(2+) site. R190 provides a ligand contact to isopentenyl diphosphate.

Belongs to the FPP/GGPP synthase family. Heterotetramer composed of 2 PDSS1/DPS1 and 2 PDSS2/DLP1 subunits. Requires Mg(2+) as cofactor.

The protein localises to the mitochondrion. It carries out the reaction 7 isopentenyl diphosphate + (2E,6E)-farnesyl diphosphate = all-trans-decaprenyl diphosphate + 7 diphosphate. The enzyme catalyses 6 isopentenyl diphosphate + (2E,6E)-farnesyl diphosphate = all-trans-nonaprenyl diphosphate + 6 diphosphate. It participates in cofactor biosynthesis; ubiquinone biosynthesis. Functionally, heterotetrameric enzyme that catalyzes the condensation of farnesyl diphosphate (FPP), which acts as a primer, and isopentenyl diphosphate (IPP) to produce prenyl diphosphates of varying chain lengths and participates in the determination of the side chain of ubiquinone. Supplies nona and decaprenyl diphosphate, the precursors for the side chain of the isoprenoid quinones ubiquinone-9 (Q9)and ubiquinone-10 (Q10) respectively. The enzyme adds isopentenyl diphosphate molecules sequentially to farnesyl diphosphate with trans stereochemistry. The protein is All trans-polyprenyl-diphosphate synthase PDSS1 of Homo sapiens (Human).